Reading from the N-terminus, the 1153-residue chain is ATP-dependent helicase/deoxyribonuclease subunit B (1153 aa).

One can recognise a UvrD-like helicase ATP-binding domain in the interval 1-289 (MELNAYIGRA…KHLEQNFNAL (289 aa)). Position 8 to 15 (8 to 15 (GRAGTGKS)) interacts with ATP. The UvrD-like helicase C-terminal domain occupies 269–583 (LDVQRFIHND…SIGTMDLAKV (315 aa)). [4Fe-4S] cluster is bound by residues Cys-784, Cys-1110, Cys-1113, and Cys-1119.

It belongs to the helicase family. AddB/RexB type 1 subfamily. Heterodimer of AddA and AddB. It depends on Mg(2+) as a cofactor. Requires [4Fe-4S] cluster as cofactor.

In terms of biological role, the heterodimer acts as both an ATP-dependent DNA helicase and an ATP-dependent, dual-direction single-stranded exonuclease. Recognizes the chi site generating a DNA molecule suitable for the initiation of homologous recombination. The AddB subunit has 5' -&gt; 3' nuclease activity but not helicase activity. The sequence is that of ATP-dependent helicase/deoxyribonuclease subunit B from Staphylococcus saprophyticus subsp. saprophyticus (strain ATCC 15305 / DSM 20229 / NCIMB 8711 / NCTC 7292 / S-41).